We begin with the raw amino-acid sequence, 225 residues long: Ferric nitrobindin-like protein (225 aa).

The short motif at 78–84 is the GXWXGXG element; it reads GVWRGTG.

This sequence belongs to the nitrobindin family.

The sequence is that of Ferric nitrobindin-like protein from Corynebacterium diphtheriae (strain ATCC 700971 / NCTC 13129 / Biotype gravis).